An 81-amino-acid chain; its full sequence is MKQNIHPNYQPVVFMDTTTGFKFLTGSTKGSKETVEWEDGNTYPLIRVEISSDSHPFYTGRQKFQAADGRIARFEKKYGKQ.

The protein belongs to the bacterial ribosomal protein bL31 family. Type B subfamily. Part of the 50S ribosomal subunit.

The protein is Large ribosomal subunit protein bL31B of Lactococcus lactis subsp. lactis (strain IL1403) (Streptococcus lactis).